A 107-amino-acid polypeptide reads, in one-letter code: Nucleoid-associated protein A1G_07310 (107 aa).

The protein belongs to the YbaB/EbfC family. In terms of assembly, homodimer.

The protein resides in the cytoplasm. It localises to the nucleoid. Functionally, binds to DNA and alters its conformation. May be involved in regulation of gene expression, nucleoid organization and DNA protection. This is Nucleoid-associated protein A1G_07310 from Rickettsia rickettsii (strain Sheila Smith).